The sequence spans 419 residues: Pygopus homolog 1 (419 aa).

Disordered stretches follow at residues 1–64 (MPAE…PNSD) and 175–338 (HFRQ…SSSD). A compositionally biased stretch (gly residues) spans 18–30 (GDSGLDGLGGPGV). Residues 35–41 (PDKKKRK) carry the Nuclear localization signal motif. Composition is skewed to polar residues over residues 175 to 221 (HFRQ…SNHS) and 240 to 255 (DFTQ…NSSA). The span at 276 to 286 (VNRNNAVNQEN) shows a compositional bias: low complexity. The segment covering 287 to 307 (SRSSSTEATNNNPANGTQNKP) has biased composition (polar residues). A PHD-type zinc finger spans residues 340 to 398 (VYPCGICTNEVNDDQDAILCEASCQKWFHRICTGMTETAYGLLTAEASAVWGCDTCMAD). The tract at residues 341–388 (YPCGICTNEVNDDQDAILCEASCQKWFHRICTGMTETAYGLLTAEASA) is interaction with H3K4me2. The tract at residues 373-391 (GMTETAYGLLTAEASAVWG) is interaction with BCL9.

As to quaternary structure, interacts with BCL9 via The PHD-type zinc finger motiv, and thereby becomes part of the nuclear beta-catenin/TCF complex. Identified in a complex with BCL9L, CDC73, CTNNB1 and PYGO1. Interacts with histone H3 mono-, di- or tri-methylated at 'Lys4' (H3K4me1, H3K4me2, H3K4me3); the interaction is enhanced by the interaction with BCL9.

It is found in the nucleus. In terms of biological role, involved in signal transduction through the Wnt pathway. In Homo sapiens (Human), this protein is Pygopus homolog 1 (PYGO1).